A 421-amino-acid chain; its full sequence is ATP-dependent RNA helicase RhlB (421 aa).

Residues Q9–A37 carry the Q motif motif. In terms of domain architecture, Helicase ATP-binding spans L40–I219. Position 53 to 60 (A53 to T60) interacts with ATP. Residues D165 to D168 carry the DEAD box motif. Residues R245–M390 enclose the Helicase C-terminal domain. The interval D392 to G421 is disordered. The segment covering P402–P414 has biased composition (low complexity).

Belongs to the DEAD box helicase family. RhlB subfamily. In terms of assembly, component of the RNA degradosome, which is a multiprotein complex involved in RNA processing and mRNA degradation.

It is found in the cytoplasm. It catalyses the reaction ATP + H2O = ADP + phosphate + H(+). Functionally, DEAD-box RNA helicase involved in RNA degradation. Has RNA-dependent ATPase activity and unwinds double-stranded RNA. This is ATP-dependent RNA helicase RhlB from Escherichia coli O7:K1 (strain IAI39 / ExPEC).